Reading from the N-terminus, the 263-residue chain is Methylesterase 2 (263 aa).

Catalysis depends on Ser-85, which acts as the Acyl-ester intermediate. Active-site charge relay system residues include Asp-213 and His-241.

This sequence belongs to the AB hydrolase superfamily. Methylesterase family.

The catalysed reaction is methyl (indol-3-yl)acetate + H2O = (indol-3-yl)acetate + methanol + H(+). It catalyses the reaction methyl (-)-jasmonate + H2O = jasmonate + methanol + H(+). It carries out the reaction methyl salicylate + H2O = salicylate + methanol + H(+). It functions in the pathway plant hormone biosynthesis. The protein operates within lipid metabolism; oxylipin biosynthesis. With respect to regulation, esterase activity is down-regulated by salicylic acid (SA). Down-regulated by agrochemicals Paraoxon, 3,4-DCl and Profenofos. Methylesterase shown to have carboxylesterase activity, methyl indole-3-acetic acid (MeIAA) esterase activity, methyl salicylate (MeSA) esterase activity and methyl jasmonate (MeJA) esterase activity in vitro. The polypeptide is Methylesterase 2 (Arabidopsis thaliana (Mouse-ear cress)).